We begin with the raw amino-acid sequence, 156 residues long: Small ribosomal subunit protein uS7 (156 aa).

The protein belongs to the universal ribosomal protein uS7 family. Part of the 30S ribosomal subunit. Contacts proteins S9 and S11.

Functionally, one of the primary rRNA binding proteins, it binds directly to 16S rRNA where it nucleates assembly of the head domain of the 30S subunit. Is located at the subunit interface close to the decoding center, probably blocks exit of the E-site tRNA. The protein is Small ribosomal subunit protein uS7 of Pelobacter propionicus (strain DSM 2379 / NBRC 103807 / OttBd1).